The sequence spans 532 residues: Fatty aldehyde dehydrogenase HFD1 (532 aa).

The residue at position 111 (S111) is a Phosphoserine. A helical membrane pass occupies residues 134 to 152 (IIAPFNFPLLLAFAPLAAA). Residue 214–219 (GSPRVG) coordinates NAD(+). Catalysis depends on residues E236 and C273.

The protein belongs to the aldehyde dehydrogenase family.

It localises to the lipid droplet. The protein localises to the mitochondrion outer membrane. The protein resides in the endosome membrane. Its subcellular location is the cytoplasmic granule membrane. It catalyses the reaction an aldehyde + NAD(+) + H2O = a carboxylate + NADH + 2 H(+). It carries out the reaction hexadecanoate + NADH + 2 H(+) = hexadecanal + NAD(+) + H2O. The catalysed reaction is 4-hydroxybenzaldehyde + NAD(+) + H2O = 4-hydroxybenzoate + NADH + 2 H(+). Catalyzes the oxidation of long-chain aliphatic aldehydes to fatty acids. Responsible for conversion of the sphingosine 1-phosphate (S1P) degradation product hexadecenal to hexadecenoic acid. Involved in coenzyme Q (CoQ) biosynthesis, catalyzing the last step in the tyrosine to 4-hydroxybenzoate (4-HB) pathway. Oxidizes 4-hydroxybenzaldehyde (4-Hbz) to 4-HB, the aromatic precursor for coenzyme Q. The chain is Fatty aldehyde dehydrogenase HFD1 (HFD1) from Saccharomyces cerevisiae (strain ATCC 204508 / S288c) (Baker's yeast).